The primary structure comprises 234 residues: Small ribosomal subunit protein eS4 (234 aa).

The 64-residue stretch at 39–102 (MPLVVVLRDL…NANYRVVIGM (64 aa)) folds into the S4 RNA-binding domain.

The protein belongs to the eukaryotic ribosomal protein eS4 family.

This Methanocella arvoryzae (strain DSM 22066 / NBRC 105507 / MRE50) protein is Small ribosomal subunit protein eS4.